The chain runs to 364 residues: DNA primase large subunit PriL (364 aa).

[4Fe-4S] cluster is bound by residues cysteine 237, cysteine 309, cysteine 318, and cysteine 325. Positions 345 to 364 (MQNDNEKGHEEKKEGETPPQ) are disordered.

This sequence belongs to the eukaryotic-type primase large subunit family. As to quaternary structure, heterodimer of a small subunit (PriS) and a large subunit (PriL). Requires [4Fe-4S] cluster as cofactor.

Functionally, regulatory subunit of DNA primase, an RNA polymerase that catalyzes the synthesis of short RNA molecules used as primers for DNA polymerase during DNA replication. Stabilizes and modulates the activity of the small subunit, increasing the rate of DNA synthesis, and conferring RNA synthesis capability. The DNA polymerase activity may enable DNA primase to also catalyze primer extension after primer synthesis. May also play a role in DNA repair. This Methanococcoides burtonii (strain DSM 6242 / NBRC 107633 / OCM 468 / ACE-M) protein is DNA primase large subunit PriL.